A 105-amino-acid chain; its full sequence is UPF0148 protein PH0795 (105 aa).

It belongs to the UPF0148 family.

The sequence is that of UPF0148 protein PH0795 from Pyrococcus horikoshii (strain ATCC 700860 / DSM 12428 / JCM 9974 / NBRC 100139 / OT-3).